The following is a 632-amino-acid chain: Chaperone protein HtpG (632 aa).

The tract at residues 1 to 343 (MSEQTINNKE…SNDLALNVSR (343 aa)) is a; substrate-binding. The interval 344-560 (EILQDNKVTQ…DFEMGTQMAK (217 aa)) is b. Residues 561–632 (LLEAAGQAAP…LSAMNQLLSK (72 aa)) are c.

It belongs to the heat shock protein 90 family. In terms of assembly, homodimer.

The protein localises to the cytoplasm. Its function is as follows. Molecular chaperone. Has ATPase activity. The sequence is that of Chaperone protein HtpG from Aliivibrio salmonicida (strain LFI1238) (Vibrio salmonicida (strain LFI1238)).